Here is a 223-residue protein sequence, read N- to C-terminus: Putative 3-methyladenine DNA glycosylase (223 aa).

The protein belongs to the DNA glycosylase MPG family.

The chain is Putative 3-methyladenine DNA glycosylase from Pseudomonas syringae pv. syringae (strain B728a).